We begin with the raw amino-acid sequence, 133 residues long: MGMTDPIADMLTRIRNANRVHFKSVDVVYSGVNVNIAKVLKKTGYIGGYDVKKDEKGHDVLKVYLKYPDSKRTIINDIQRVSKPGRRVYVKGDEIPKVLNGYGVAIISTSKGVITDKEAREKSVGGEVLCKVW.

It belongs to the universal ribosomal protein uS8 family. In terms of assembly, part of the 30S ribosomal subunit. Contacts proteins S5 and S12.

Functionally, one of the primary rRNA binding proteins, it binds directly to 16S rRNA central domain where it helps coordinate assembly of the platform of the 30S subunit. The polypeptide is Small ribosomal subunit protein uS8 (Syntrophus aciditrophicus (strain SB)).